The chain runs to 318 residues: Dehydrogenase/reductase SDR family member 7C-B (318 aa).

A signal peptide spans 1 to 32 (MGMSDIMWLDVSWAWLVLTAVLLAAAVFYLYT). 49-73 (LITDSLSTVGNECAKLFHAGGARLI) contributes to the NAD(+) binding site. Ser186 serves as a coordination point for substrate. The active-site Proton acceptor is Tyr199.

The protein belongs to the short-chain dehydrogenases/reductases (SDR) family.

Its subcellular location is the secreted. Putative oxidoreductase. The sequence is that of Dehydrogenase/reductase SDR family member 7C-B (dhrs7cb) from Danio rerio (Zebrafish).